Consider the following 419-residue polypeptide: Napsin-A (419 aa).

The first 16 residues, 1–16 (MSPLLLLLLCLLLGNL), serve as a signal peptide directing secretion. Positions 73–394 (YFGTIGLGTP…KNVGPRVGLA (322 aa)) constitute a Peptidase A1 domain. A glycan (N-linked (GlcNAc...) asparagine) is linked at N85. Residue D91 is part of the active site. The cysteines at positions 104 and 111 are disulfide-linked. N128 and N149 each carry an N-linked (GlcNAc...) asparagine glycan. C269 and C273 form a disulfide bridge. The active site involves D278. A disulfide bridge links C312 with C349. N-linked (GlcNAc...) asparagine glycosylation occurs at N331. The tract at residues 391–419 (VGLARAQSRSTDRAERRTTQAQFFKRRPG) is disordered.

It belongs to the peptidase A1 family. In terms of tissue distribution, expressed at the highest levels in the kidney, at a moderate level in the lung, and at low levels in the spleen and adipose tissue.

The protein localises to the secreted. Its function is as follows. May be involved in processing of pneumocyte surfactant precursors. The protein is Napsin-A (Napsa) of Mus musculus (Mouse).